Consider the following 185-residue polypeptide: Ribosome-recycling factor (185 aa).

The disordered stretch occupies residues 140–166 (KRQEKDGDITEDEQRSLEKQVQKVTDD).

It belongs to the RRF family.

It localises to the cytoplasm. Responsible for the release of ribosomes from messenger RNA at the termination of protein biosynthesis. May increase the efficiency of translation by recycling ribosomes from one round of translation to another. This chain is Ribosome-recycling factor, found in Lactobacillus johnsonii (strain CNCM I-12250 / La1 / NCC 533).